Reading from the N-terminus, the 410-residue chain is Arginine biosynthesis bifunctional protein ArgJ (410 aa).

Substrate is bound by residues T160, K186, T197, E283, N405, and T410. T197 serves as the catalytic Nucleophile.

It belongs to the ArgJ family. In terms of assembly, heterotetramer of two alpha and two beta chains.

Its subcellular location is the cytoplasm. The catalysed reaction is N(2)-acetyl-L-ornithine + L-glutamate = N-acetyl-L-glutamate + L-ornithine. It carries out the reaction L-glutamate + acetyl-CoA = N-acetyl-L-glutamate + CoA + H(+). It participates in amino-acid biosynthesis; L-arginine biosynthesis; L-ornithine and N-acetyl-L-glutamate from L-glutamate and N(2)-acetyl-L-ornithine (cyclic): step 1/1. Its pathway is amino-acid biosynthesis; L-arginine biosynthesis; N(2)-acetyl-L-ornithine from L-glutamate: step 1/4. Competitively inhibited by L-ornithine. Functionally, catalyzes two activities which are involved in the cyclic version of arginine biosynthesis: the synthesis of N-acetylglutamate from glutamate and acetyl-CoA as the acetyl donor, and of ornithine by transacetylation between N(2)-acetylornithine and glutamate. This is Arginine biosynthesis bifunctional protein ArgJ from Geobacillus stearothermophilus (Bacillus stearothermophilus).